Here is a 375-residue protein sequence, read N- to C-terminus: Killer cell immunoglobulin-like receptor 2DL5B (375 aa).

An N-terminal signal peptide occupies residues 1–21 (MSLMVVSMACVGFFLLQGAWT). At 22–238 (HEGGQDKPLL…PSSKTGIRRH (217 aa)) the chain is on the extracellular side. Ig-like C2-type domains follow at residues 42–102 (GGHV…HPRS) and 137–200 (GENV…LHDS). Intrachain disulfides connect Cys-49/Cys-95 and Cys-144/Cys-193. The segment at 213-233 (VSVTGNSSSSSSSPTEPSSKT) is disordered. N-linked (GlcNAc...) asparagine glycosylation occurs at Asn-218. A compositionally biased stretch (low complexity) spans 219–231 (SSSSSSSPTEPSS). Residues 239–259 (LHILIGTSVAIILFIILFFFL) traverse the membrane as a helical segment. Residues 260–375 (LHCCCSNKKN…ASSHVPAAGI (116 aa)) are Cytoplasmic-facing. Residues 334-375 (AKPRSLSPAHKHHSQALRGSSRETTALSQNRVASSHVPAAGI) are disordered. The segment covering 355–366 (RETTALSQNRVA) has biased composition (polar residues).

This sequence belongs to the immunoglobulin superfamily.

It is found in the cell membrane. In terms of biological role, receptor on natural killer (NK) cells for HLA-C alleles. Inhibits the activity of NK cells thus preventing cell lysis. The polypeptide is Killer cell immunoglobulin-like receptor 2DL5B (KIR2DL5B) (Homo sapiens (Human)).